A 342-amino-acid chain; its full sequence is S-methyl-5'-thioadenosine phosphorylase (342 aa).

Residues Thr51, 99–100 (RH), and 132–133 (SA) each bind phosphate. Position 234 (Met234) interacts with substrate. Ser235 is a phosphate binding site. 258–260 (DYD) serves as a coordination point for substrate.

This sequence belongs to the PNP/MTAP phosphorylase family. MTAP subfamily. As to quaternary structure, homotrimer.

Its subcellular location is the cytoplasm. The protein localises to the nucleus. It carries out the reaction S-methyl-5'-thioadenosine + phosphate = 5-(methylsulfanyl)-alpha-D-ribose 1-phosphate + adenine. The protein operates within amino-acid biosynthesis; L-methionine biosynthesis via salvage pathway; S-methyl-5-thio-alpha-D-ribose 1-phosphate from S-methyl-5'-thioadenosine (phosphorylase route): step 1/1. In terms of biological role, catalyzes the reversible phosphorylation of S-methyl-5'-thioadenosine (MTA) to adenine and 5-methylthioribose-1-phosphate. Involved in the breakdown of MTA, a major by-product of polyamine biosynthesis. Responsible for the first step in the methionine salvage pathway after MTA has been generated from S-adenosylmethionine. Has broad substrate specificity with 6-aminopurine nucleosides as preferred substrates. In Aspergillus fumigatus (strain ATCC MYA-4609 / CBS 101355 / FGSC A1100 / Af293) (Neosartorya fumigata), this protein is S-methyl-5'-thioadenosine phosphorylase.